The chain runs to 381 residues: Succinyl-diaminopimelate desuccinylase (381 aa).

Residue His69 coordinates Zn(2+). Residue Asp71 is part of the active site. Asp103 provides a ligand contact to Zn(2+). The Proton acceptor role is filled by Glu137. Glu138, Glu166, and His355 together coordinate Zn(2+).

The protein belongs to the peptidase M20A family. DapE subfamily. Homodimer. Zn(2+) serves as cofactor. The cofactor is Co(2+).

The enzyme catalyses N-succinyl-(2S,6S)-2,6-diaminopimelate + H2O = (2S,6S)-2,6-diaminopimelate + succinate. Its pathway is amino-acid biosynthesis; L-lysine biosynthesis via DAP pathway; LL-2,6-diaminopimelate from (S)-tetrahydrodipicolinate (succinylase route): step 3/3. Functionally, catalyzes the hydrolysis of N-succinyl-L,L-diaminopimelic acid (SDAP), forming succinate and LL-2,6-diaminopimelate (DAP), an intermediate involved in the bacterial biosynthesis of lysine and meso-diaminopimelic acid, an essential component of bacterial cell walls. The sequence is that of Succinyl-diaminopimelate desuccinylase from Rickettsia massiliae (strain Mtu5).